A 397-amino-acid polypeptide reads, in one-letter code: Homeobox protein knotted-1-like 2 (397 aa).

3 disordered regions span residues 43 to 68 (TFHL…SPGT), 172 to 191 (FEAR…DPEL), and 233 to 276 (NNNA…PRAE). Gly residues predominate over residues 49–58 (SGGGGGGGSG). In terms of domain architecture, ELK spans 279-299 (ELKNHLLRKYSGYLSSLKQEL). A DNA-binding region (homeobox; TALE-type) is located at residues 300–363 (SKKKKKGKLP…NQRKRHWKPS (64 aa)).

It belongs to the TALE/KNOX homeobox family. In terms of tissue distribution, expressed only in the stems.

The protein localises to the nucleus. In terms of biological role, probably binds to the DNA sequence 5'-TGAC-3'. The chain is Homeobox protein knotted-1-like 2 from Malus domestica (Apple).